The sequence spans 278 residues: Tryptophan synthase alpha chain (278 aa).

Active-site proton acceptor residues include Glu50 and Asp61.

The protein belongs to the TrpA family. As to quaternary structure, tetramer of two alpha and two beta chains.

It carries out the reaction (1S,2R)-1-C-(indol-3-yl)glycerol 3-phosphate + L-serine = D-glyceraldehyde 3-phosphate + L-tryptophan + H2O. It functions in the pathway amino-acid biosynthesis; L-tryptophan biosynthesis; L-tryptophan from chorismate: step 5/5. In terms of biological role, the alpha subunit is responsible for the aldol cleavage of indoleglycerol phosphate to indole and glyceraldehyde 3-phosphate. The protein is Tryptophan synthase alpha chain of Rhodopseudomonas palustris (strain HaA2).